The following is a 335-amino-acid chain: Fructose-1,6-bisphosphatase class 1 (335 aa).

Residues glutamate 92, aspartate 114, leucine 116, and aspartate 117 each contribute to the Mg(2+) site. Substrate contacts are provided by residues 117–120, asparagine 209, and lysine 275; that span reads DGSS. Position 281 (glutamate 281) interacts with Mg(2+).

It belongs to the FBPase class 1 family. As to quaternary structure, homotetramer. Requires Mg(2+) as cofactor.

It is found in the cytoplasm. It catalyses the reaction beta-D-fructose 1,6-bisphosphate + H2O = beta-D-fructose 6-phosphate + phosphate. It participates in carbohydrate biosynthesis; gluconeogenesis. The protein is Fructose-1,6-bisphosphatase class 1 of Polaromonas sp. (strain JS666 / ATCC BAA-500).